Reading from the N-terminus, the 864-residue chain is Translation initiation factor IF-2 (864 aa).

Residues 1–252 (MEDKNKTIKE…KTSSDKRDFS (252 aa)) form a disordered region. The span at 78 to 90 (KEVKYEESSRKQD) shows a compositional bias: basic and acidic residues. Residues 106-120 (VRPSGDSSYPVSRSP) are compositionally biased toward polar residues. Gly residues predominate over residues 150-212 (RGPGQGGGYQ…PGNRSGGPGG (63 aa)). The span at 239–252 (HDKEKTSSDKRDFS) shows a compositional bias: basic and acidic residues. The region spanning 359–528 (NRPPVVTIMG…LLQAEVMDLK (170 aa)) is the tr-type G domain. The tract at residues 368–375 (GHVDHGKT) is G1. Position 368–375 (368–375 (GHVDHGKT)) interacts with GTP. The tract at residues 393–397 (GITQH) is G2. The interval 414–417 (DTPG) is G3. Residues 414 to 418 (DTPGH) and 468 to 471 (NKID) contribute to the GTP site. The segment at 468 to 471 (NKID) is G4. A G5 region spans residues 504 to 506 (SAR).

Belongs to the TRAFAC class translation factor GTPase superfamily. Classic translation factor GTPase family. IF-2 subfamily.

The protein resides in the cytoplasm. One of the essential components for the initiation of protein synthesis. Protects formylmethionyl-tRNA from spontaneous hydrolysis and promotes its binding to the 30S ribosomal subunits. Also involved in the hydrolysis of GTP during the formation of the 70S ribosomal complex. In Leptospira borgpetersenii serovar Hardjo-bovis (strain L550), this protein is Translation initiation factor IF-2.